The sequence spans 230 residues: Uracil-DNA glycosylase (230 aa).

The Proton acceptor role is filled by Asp-65.

It belongs to the uracil-DNA glycosylase (UDG) superfamily. UNG family.

It is found in the cytoplasm. The catalysed reaction is Hydrolyzes single-stranded DNA or mismatched double-stranded DNA and polynucleotides, releasing free uracil.. In terms of biological role, excises uracil residues from the DNA which can arise as a result of misincorporation of dUMP residues by DNA polymerase or due to deamination of cytosine. The sequence is that of Uracil-DNA glycosylase from Lactiplantibacillus plantarum (strain ATCC BAA-793 / NCIMB 8826 / WCFS1) (Lactobacillus plantarum).